The following is a 319-amino-acid chain: Zinc finger protein-like 1 homolog (319 aa).

The B box-type; degenerate zinc finger occupies 1-43; it reads MGLCKCPKRKVTNLFCYEHRVNVCEFCLVDNHPNCVVQSYLNW. The segment at 53 to 101 adopts an RING-type; atypical zinc-finger fold; it reads CSLCHTTLTQGETIRLNCLHLLHWRCFDDWAASFPPTTAPAGYRCPCCS. The tract at residues 212–232 is disordered; that stretch reads ESSSDTRPLLRQDRDADNEEN. Over residues 219 to 232 the composition is skewed to basic and acidic residues; it reads PLLRQDRDADNEEN. A helical membrane pass occupies residues 264 to 284; it reads KMAIFVMFLALLALITIITVL.

The protein belongs to the ZFPL1 family.

Its subcellular location is the membrane. This chain is Zinc finger protein-like 1 homolog, found in Caenorhabditis briggsae.